The chain runs to 276 residues: MRLLFLLLFSLGITCSYGDEVSTRKQILVSIVPYKFLVEQIAGDTCQVFSIVMDNHDPHNYELSPKYIEKIRQVELWFKIGEGFEKTCERIISCKQVDLAANIDKITNGACCQRFLSFDTHTWLSPKNLKIQIQAITEALVETAPEHETLYRKNCSLLQSQLDLLDQKISSIVSSTSQRNVLVTHGAFAYFCRDYGFIQHTIERANHSELSPKDVVRVERTIRDHNLHSVILLKHAGKRSSAALVRKFNMTPILLDPYAEDVFNNLLAIATAFANL.

Residues 1-18 (MRLLFLLLFSLGITCSYG) form the signal peptide. Residues His-59, His-121, His-185, and Asp-256 each coordinate a divalent metal cation.

This sequence belongs to the bacterial solute-binding protein 9 family.

The protein localises to the periplasm. Part of an ATP-binding cassette (ABC) transport system involved in metal import. Binds a metal with high affinity and specificity and delivers it to the membrane permease for translocation into the cytoplasm. The protein is Putative metal-binding protein CT_415 of Chlamydia trachomatis serovar D (strain ATCC VR-885 / DSM 19411 / UW-3/Cx).